A 570-amino-acid chain; its full sequence is Proline--tRNA ligase (570 aa).

This sequence belongs to the class-II aminoacyl-tRNA synthetase family. ProS type 1 subfamily. Homodimer.

Its subcellular location is the cytoplasm. It carries out the reaction tRNA(Pro) + L-proline + ATP = L-prolyl-tRNA(Pro) + AMP + diphosphate. In terms of biological role, catalyzes the attachment of proline to tRNA(Pro) in a two-step reaction: proline is first activated by ATP to form Pro-AMP and then transferred to the acceptor end of tRNA(Pro). As ProRS can inadvertently accommodate and process non-cognate amino acids such as alanine and cysteine, to avoid such errors it has two additional distinct editing activities against alanine. One activity is designated as 'pretransfer' editing and involves the tRNA(Pro)-independent hydrolysis of activated Ala-AMP. The other activity is designated 'posttransfer' editing and involves deacylation of mischarged Ala-tRNA(Pro). The misacylated Cys-tRNA(Pro) is not edited by ProRS. The polypeptide is Proline--tRNA ligase (Geotalea daltonii (strain DSM 22248 / JCM 15807 / FRC-32) (Geobacter daltonii)).